The following is a 241-amino-acid chain: Trypsin-1 (241 aa).

The first 13 residues, 1–13 (MKSLIFVLLLGAV), serve as a signal peptide directing secretion. Positions 14-19 (FAEEDK) are cleaved as a propeptide — activation peptide. Positions 20 to 239 (IVGGYECTKH…LSGWVRDTMA (220 aa)) constitute a Peptidase S1 domain. 6 disulfides stabilise this stretch: Cys26–Cys155, Cys44–Cys60, Cys128–Cys228, Cys135–Cys201, Cys166–Cys180, and Cys191–Cys215. Residues His59 and Asp103 each act as charge relay system in the active site. Catalysis depends on Ser195, which acts as the Charge relay system.

It belongs to the peptidase S1 family.

It localises to the secreted. The protein resides in the extracellular space. It catalyses the reaction Preferential cleavage: Arg-|-Xaa, Lys-|-Xaa.. The chain is Trypsin-1 from Gadus morhua (Atlantic cod).